The sequence spans 242 residues: MDEKELKLRKLLIEGASGFGVNLDDEQIDKFFAYKDVLKEWNQKMNLTAIEDDEEIILKHFIDSISICPIIKDKNLALIDVGTGAGFPGIPVKIVFPELKVKLLDSLEKRTKFLNEVIERLDLKDISTVHARAEEKGVDPDYREKYDISVARAVASLPVLLEYCLPFVKVGGCFIAMKGNSTEEVENSKKALEILGGKIEDILEFNLPFSDIKRNVIVIKKFRQTPTKYPRKSGKPSKNPLT.

Residues Gly-82, Phe-87, 133 to 134, and Arg-152 contribute to the S-adenosyl-L-methionine site; that span reads AE.

This sequence belongs to the methyltransferase superfamily. RNA methyltransferase RsmG family.

It localises to the cytoplasm. Its function is as follows. Specifically methylates the N7 position of a guanine in 16S rRNA. The sequence is that of Ribosomal RNA small subunit methyltransferase G from Acetivibrio thermocellus (strain ATCC 27405 / DSM 1237 / JCM 9322 / NBRC 103400 / NCIMB 10682 / NRRL B-4536 / VPI 7372) (Clostridium thermocellum).